A 235-amino-acid polypeptide reads, in one-letter code: Casparian strip membrane protein 2 (235 aa).

At 1-70 (MTSESATVIQ…RSGAEGFRRC (70 aa)) the chain is on the cytoplasmic side. The helical transmembrane segment at 71–91 (LAVIDFLLRVAAFGPTLAAAI) threads the bilayer. Over 92–118 (STGTADERLSVFTNFFQFHARFDDFPA) the chain is Extracellular. Residues 119–139 (FTFFLVANAVAAGYLVLSLPF) traverse the membrane as a helical segment. Topologically, residues 140–162 (SVVVILRPNKATGGVRLLLLLCD) are cytoplasmic. Residues 163–183 (VLIMALLTAAGAAAAAIVYVA) traverse the membrane as a helical segment. The Extracellular portion of the chain corresponds to 184–210 (HSGNRRANWVPICMQFHGFCQRTSGSV). A helical transmembrane segment spans residues 211–231 (VATFLAVLVFIVLILMAACVI). The Cytoplasmic segment spans residues 232-235 (RRSK).

The protein belongs to the Casparian strip membrane proteins (CASP) family. In terms of assembly, homodimer and heterodimers.

The protein resides in the cell membrane. In terms of biological role, regulates membrane-cell wall junctions and localized cell wall deposition. Required for establishment of the Casparian strip membrane domain (CSD) and the subsequent formation of Casparian strips, a cell wall modification of the root endodermis that determines an apoplastic barrier between the intraorganismal apoplasm and the extraorganismal apoplasm and prevents lateral diffusion. The protein is Casparian strip membrane protein 2 of Sorghum bicolor (Sorghum).